The following is a 103-amino-acid chain: uncharacterized protein (103 aa).

Residues 10–63 (FPECDHLKQIYDKCFTEFFQKFITPNYRHQYAVNPCERLHDVYKRCVEERLATQ) enclose the CHCH domain. Short sequence motifs (cx9C motif) lie at residues 13 to 23 (CDHLKQIYDKC) and 45 to 55 (CERLHDVYKRC). 2 cysteine pairs are disulfide-bonded: Cys13–Cys55 and Cys23–Cys45. A compositionally biased stretch (basic and acidic residues) spans 80-90 (TDDDKLKDRQN). Residues 80–103 (TDDDKLKDRQNNQKTNSENKCSSS) are disordered. The span at 91–103 (NQKTNSENKCSSS) shows a compositional bias: polar residues.

Belongs to the TRIAP1/MDM35 family.

This is an uncharacterized protein from Caenorhabditis elegans.